A 518-amino-acid chain; its full sequence is Probable cyclic di-GMP phosphodiesterase PdeN (518 aa).

2 helical membrane passes run 16–36 (CIVA…LVAW) and 236–256 (VWYA…LCYY). Residues 261–514 (RMRPGREIMT…DFVRWLKKPY (254 aa)) enclose the EAL domain.

The protein localises to the cell inner membrane. It carries out the reaction 3',3'-c-di-GMP + H2O = 5'-phosphoguanylyl(3'-&gt;5')guanosine + H(+). Its function is as follows. Phosphodiesterase (PDE) that catalyzes the hydrolysis of cyclic-di-GMP (c-di-GMP) to 5'-pGpG. The protein is Probable cyclic di-GMP phosphodiesterase PdeN of Escherichia coli (strain K12).